Reading from the N-terminus, the 185-residue chain is Ribosome-recycling factor (185 aa).

Residues 140–166 (KRQEKDGDITEDEQRSLEKQVQKVTDD) are disordered.

This sequence belongs to the RRF family.

Its subcellular location is the cytoplasm. Its function is as follows. Responsible for the release of ribosomes from messenger RNA at the termination of protein biosynthesis. May increase the efficiency of translation by recycling ribosomes from one round of translation to another. This Lactobacillus johnsonii (strain CNCM I-12250 / La1 / NCC 533) protein is Ribosome-recycling factor.